We begin with the raw amino-acid sequence, 633 residues long: Chaperone protein DnaK (633 aa).

A Phosphothreonine; by autocatalysis modification is found at Thr198. The disordered stretch occupies residues 599-633; the sequence is QQASQETPGDGDAGAAGAKKKDDDDVVDADYEEVK. Residues 622–633 show a composition bias toward acidic residues; that stretch reads DDVVDADYEEVK.

It belongs to the heat shock protein 70 family.

Acts as a chaperone. This Desulfotalea psychrophila (strain LSv54 / DSM 12343) protein is Chaperone protein DnaK.